We begin with the raw amino-acid sequence, 489 residues long: Hyaluronoglucuronidase (489 aa).

The Proton donor role is filled by Glu-176. The active-site Nucleophile is Glu-290.

The protein belongs to the glycosyl hydrolase 79 family.

It carries out the reaction Random hydrolysis of (1-&gt;3)-linkages between beta-D-glucuronate and N-acetyl-D-glucosamine residues in hyaluronate.. Hyaluronidase activity is inhibited by Mn(2+), Cu(2+) and Fe(3+). Functionally, hyaluronidase that mediates hydrolysis of (1-&gt;3)-linkages between beta-D-glucuronate and N-acetyl-D-glucosamine residues in hyaluronate. Very specific to hyaluronate: not able to hydrolyze chitin, heparin or chondroitin sulfate. The protein is Hyaluronoglucuronidase of Hirudo nipponia (Korean blood-sucking leech).